Here is a 295-residue protein sequence, read N- to C-terminus: sn-glycerol-3-phosphate transport system permease protein UgpA (295 aa).

The Cytoplasmic segment spans residues 1–11; it reads MSPSRPGFSCS. A helical transmembrane segment spans residues 12–32; sequence WLPYLLVLPQLAITAIFFLWP. The Periplasmic portion of the chain corresponds to 33 to 80; it reads AGEALWYSVQTLDPFGLSSEFVGLSNFIQLFQDEYYLASFYTTLIFSA. Positions 72-284 constitute an ABC transmembrane type-1 domain; that stretch reads FYTTLIFSAL…LLVIGLTVIQ (213 aa). Residues 81-101 form a helical membrane-spanning segment; sequence LVAGIGLIVSLFLAAMVNYVL. Residues 102 to 109 lie on the Cytoplasmic side of the membrane; that stretch reads RGSRLYQT. A helical membrane pass occupies residues 110 to 130; the sequence is LLILPYAVAPAVAAVLWIFLF. Residues 131–157 lie on the Periplasmic side of the membrane; sequence DPGLGLITHALAKLGYSWNHAQNSGQA. Residues 158 to 178 traverse the membrane as a helical segment; sequence MFLVVLASVWKQISYNFLFFL. The Cytoplasmic portion of the chain corresponds to 179 to 207; the sequence is AALQSIPKSLVEAAAIDGAGPVRRFFNLV. Residues 208-228 traverse the membrane as a helical segment; that stretch reads LPLISPVSFFLLVVNLVYAFF. At 229–262 the chain is on the periplasmic side; that stretch reads DTFPVIDAATGGGPVQATTTLIYKIYREGFAGLD. The chain crosses the membrane as a helical span at residues 263–283; it reads LSSSAAQSVILMLLVIGLTVI. The Cytoplasmic portion of the chain corresponds to 284–295; sequence QFRFVERKVRYQ.

The protein belongs to the binding-protein-dependent transport system permease family. UgpAE subfamily. The complex is composed of two ATP-binding proteins (UgpC), two transmembrane proteins (UgpA and UgpE) and a solute-binding protein (UgpB).

The protein resides in the cell inner membrane. In terms of biological role, part of the ABC transporter complex UgpBAEC involved in sn-glycerol-3-phosphate (G3P) import. Probably responsible for the translocation of the substrate across the membrane. The chain is sn-glycerol-3-phosphate transport system permease protein UgpA (ugpA) from Yersinia pestis bv. Antiqua (strain Antiqua).